Here is a 412-residue protein sequence, read N- to C-terminus: Probable histone-binding protein rba-1 (412 aa).

6 WD repeats span residues 117–157 (NHPG…SEPK), 169–209 (GHEG…TISG), 219–259 (GHSS…PQLT), 262–302 (GHTA…KKMY), 306–346 (HHND…DPSS), and 365–405 (GHTG…VSSE).

Belongs to the WD repeat RBAP46/RBAP48/MSI1 family. In terms of assembly, binds directly to helix 1 of the histone fold of histone H4, a region that is not accessible when H4 is in chromatin. Interacts with zft-11; the interaction is required to suppress the activation of non-neuronal genes in neurons.

It is found in the nucleus. Functionally, core histone-binding subunit that may target chromatin assembly factors, chromatin remodeling factors and histone deacetylases to their histone substrates in a manner that is regulated by nucleosomal DNA. Plays a role in regulating cell cycle progression. Required to repress the induction of vulval development by Ras signaling. In association with the zinc finger protein ztf-11, negatively regulates the expression of non-neuronal genes during neurogenesis. In Caenorhabditis elegans, this protein is Probable histone-binding protein rba-1.